The following is a 400-amino-acid chain: Diphosphomevalonate decarboxylase (400 aa).

(R)-5-diphosphomevalonate contacts are provided by residues 25–28 (YWGK), arginine 80, 155–160 (SGSACR), and threonine 211.

It belongs to the diphosphomevalonate decarboxylase family. In terms of assembly, homodimer.

Its subcellular location is the cytoplasm. The enzyme catalyses (R)-5-diphosphomevalonate + ATP = isopentenyl diphosphate + ADP + phosphate + CO2. The protein operates within steroid biosynthesis; cholesterol biosynthesis. Its function is as follows. Catalyzes the ATP dependent decarboxylation of (R)-5-diphosphomevalonate to form isopentenyl diphosphate (IPP). Functions in the mevalonate (MVA) pathway leading to isopentenyl diphosphate (IPP), a key precursor for the biosynthesis of isoprenoids and sterol synthesis. The protein is Diphosphomevalonate decarboxylase (mvd) of Danio rerio (Zebrafish).